A 54-amino-acid polypeptide reads, in one-letter code: Large ribosomal subunit protein bL33B (54 aa).

The protein belongs to the bacterial ribosomal protein bL33 family.

The chain is Large ribosomal subunit protein bL33B from Mycolicibacterium smegmatis (strain ATCC 700084 / mc(2)155) (Mycobacterium smegmatis).